We begin with the raw amino-acid sequence, 60 residues long: LKCKKLVPLFSKTCPPGKNLCYKMFMVATPKVPVKRGCIDVCPKSSLLVKYVCCNTDKCN.

Intrachain disulfides connect cysteine 3-cysteine 21, cysteine 14-cysteine 38, cysteine 42-cysteine 53, and cysteine 54-cysteine 59.

It belongs to the three-finger toxin family. Short-chain subfamily. Type IA cytotoxin sub-subfamily. In terms of assembly, monomer in solution; Homodimer and oligomer in the presence of negatively charged lipids forming a pore with a size ranging between 20 and 30 Angstroms. In terms of tissue distribution, expressed by the venom gland.

It localises to the secreted. The protein resides in the target cell membrane. Functionally, shows cytolytic activity on many different cells by forming pore in lipid membranes. In vivo, increases heart rate or kills the animal by cardiac arrest. In addition, it binds to heparin with high affinity, interacts with Kv channel-interacting protein 1 (KCNIP1) in a calcium-independent manner, and binds to integrin alpha-V/beta-3 (ITGAV/ITGB3) with moderate affinity. This Naja atra (Chinese cobra) protein is Cytotoxin SP15a.